We begin with the raw amino-acid sequence, 1580 residues long: Transcriptional activator GLI3 (1580 aa).

At Met-1 the chain carries N-acetylmethionine. 2 stretches are compositionally biased toward polar residues: residues 1–10 (MEAQSHSSTT) and 58–78 (ITMQ…PSTS). Residues 1 to 79 (MEAQSHSSTT…KVSEEPSTSS (79 aa)) are disordered. The residue at position 175 (Arg-175) is an Omega-N-methylarginine. Residues 368–475 (QSLGSAFGHS…DKDESKQEPE (108 aa)) are disordered. The span at 401–427 (NPVQVSSGPSESSQNKPTSESAVSSTG) shows a compositional bias: polar residues. Glycyl lysine isopeptide (Lys-Gly) (interchain with G-Cter in SUMO2) cross-links involve residues Lys-438 and Lys-462. Residues 461–474 (VKEEGDKDESKQEP) are compositionally biased toward basic and acidic residues. 5 consecutive C2H2-type zinc fingers follow at residues 480-505 (TNCH…NNDH), 513-540 (FVCR…MRRH), 546-570 (HKCT…LRSH), 576-601 (YVCE…NRTH), and 607-632 (YVCK…KTVH). The tract at residues 620–728 (DPSSLRKHVK…PISNYSNSGL (109 aa)) is disordered. Residues 632–648 (HGPEAHVTKKQRGDIHP) show a composition bias toward basic and acidic residues. Phosphoserine is present on Ser-664. The span at 684-699 (SKREECLQVKTVKAEK) shows a compositional bias: basic and acidic residues. The segment covering 703 to 726 (SQPSPGGQSSCSSQQSPISNYSNS) has biased composition (low complexity). Residues 745–845 (DETPIMDSTI…VDVTMLNMLN (101 aa)) are mediates interaction with DZIP1. Lys-773 is covalently cross-linked (Glycyl lysine isopeptide (Lys-Gly) (interchain with G-Cter in ubiquitin)). Lys-779 participates in a covalent cross-link: Glycyl lysine isopeptide (Lys-Gly) (interchain with G-Cter in SUMO2); alternate. Residue Lys-779 forms a Glycyl lysine isopeptide (Lys-Gly) (interchain with G-Cter in ubiquitin); alternate linkage. Glycyl lysine isopeptide (Lys-Gly) (interchain with G-Cter in ubiquitin) cross-links involve residues Lys-784 and Lys-800. A phosphoserine; by PKA mark is found at Ser-849, Ser-865, Ser-877, and Ser-907. Low complexity predominate over residues 863 to 882 (RSSGISPCFSSRRSSEASQA). A disordered region spans residues 863–918 (RSSGISPCFSSRRSSEASQAEGRPQNVSVADSYDPISTDASRRSSEASQSDGLPSL). A compositionally biased stretch (polar residues) spans 908 to 918 (EASQSDGLPSL). Phosphoserine; by PKA occurs at positions 980 and 1006. A disordered region spans residues 981 to 1042 (DGGAHGYGRR…PAMATSAEKR (62 aa)).

It belongs to the GLI C2H2-type zinc-finger protein family. The full-length GLI3 form (GLI3FL) interacts with SUFU and this interaction regulates the formation of either repressor or activator forms of GLI3. Its association with SUFU is regulated by Hh signaling and dissociation of the SUFU-GLI3 interaction requires the presence of the ciliary motor KIF3A. Interacts with KIF7. The activator form of GLI3 (GLI3A) but not the repressor form (GLI3R) can interact with TRPS1. The phosphorylated form interacts with BTRC. Interacts with ZIC1. Interacts with ZIC3 (via C2H2-type domains 3, 4 and 5); the interaction enhances its transcriptional activity. Interacts with WRD11; the interaction associates EMX1 with GLI3. Interacts with DZIP1; retains GLI3 within the cytoplasm. In terms of processing, phosphorylated on multiple sites by protein kinase A (PKA) and phosphorylation by PKA primes further phosphorylation by CK1 and GSK3. Phosphorylated by DYRK2 (in vitro). Phosphorylation is essential for its proteolytic processing. Transcriptional repressor GLI3R, a C-terminally truncated form, is generated from the full-length GLI3 protein (GLI3FL/GLI3-190) through proteolytic processing. This process requires PKA-primed phosphorylation of GLI3, ubiquitination of GLI3 and the presence of BTRC. GLI3FL is complexed with SUFU in the cytoplasm and is maintained in a neutral state. Without the Hh signal, the SUFU-GLI3 complex is recruited to cilia, leading to the efficient processing of GLI3FL into GLI3R. GLI3R formation leads to its dissociation from SUFU, allowing it to translocate into the nucleus, and repress Hh target genes. When Hh signaling is initiated, SUFU dissociates from GLI3FL and this has two consequences. First, GLI3R production is halted. Second, free GLI3FL translocates to the nucleus, where it is phosphorylated, destabilized, and converted to a transcriptional activator (GLI3A). Phosphorylated in vitro by ULK3.

The protein localises to the nucleus. It is found in the cytoplasm. Its subcellular location is the cell projection. The protein resides in the cilium. Its function is as follows. Has a dual function as a transcriptional activator and a repressor of the sonic hedgehog (Shh) pathway, and plays a role in limb development. The full-length GLI3 form (GLI3FL) after phosphorylation and nuclear translocation, acts as an activator (GLI3A) while GLI3R, its C-terminally truncated form, acts as a repressor. A proper balance between the GLI3 activator and the repressor GLI3R, rather than the repressor gradient itself or the activator/repressor ratio gradient, specifies limb digit number and identity. In concert with TRPS1, plays a role in regulating the size of the zone of distal chondrocytes, in restricting the zone of PTHLH expression in distal cells and in activating chondrocyte proliferation. Binds to the minimal GLI-consensus sequence 5'-GGGTGGTC-3'. Plays a role in limb and brain development. This Pan troglodytes (Chimpanzee) protein is Transcriptional activator GLI3 (GLI3).